The chain runs to 265 residues: tRNA pseudouridine synthase A (265 aa).

The active-site Nucleophile is the Asp58. Tyr116 lines the substrate pocket.

The protein belongs to the tRNA pseudouridine synthase TruA family. Homodimer.

The enzyme catalyses uridine(38/39/40) in tRNA = pseudouridine(38/39/40) in tRNA. Formation of pseudouridine at positions 38, 39 and 40 in the anticodon stem and loop of transfer RNAs. The protein is tRNA pseudouridine synthase A of Neisseria gonorrhoeae (strain ATCC 700825 / FA 1090).